The sequence spans 149 residues: Transcriptional repressor NrdR (149 aa).

The segment at 3–34 is a zinc-finger region; sequence CPFCSENDTKVIDSRLVADGHQVRRRRQCLAC. Residues 49-139 enclose the ATP-cone domain; the sequence is PKVIKSNGNR…VYRSFEDIRE (91 aa).

It belongs to the NrdR family. Requires Zn(2+) as cofactor.

Negatively regulates transcription of bacterial ribonucleotide reductase nrd genes and operons by binding to NrdR-boxes. The polypeptide is Transcriptional repressor NrdR (Vibrio vulnificus (strain YJ016)).